Consider the following 439-residue polypeptide: UPF0229 protein Nham_0975 (439 aa).

The tract at residues Arg-39–Asp-106 is disordered. Over residues Ser-58 to Val-76 the composition is skewed to basic and acidic residues.

Belongs to the UPF0229 family.

This Nitrobacter hamburgensis (strain DSM 10229 / NCIMB 13809 / X14) protein is UPF0229 protein Nham_0975.